Consider the following 185-residue polypeptide: MISAGDLRKGVTFEFDGQVFTVTDFLHVKPGKGAAFVRTKLRNVISGGVVDRTFNPTEKLQEAVIERKEMQYLYSDGELYYFMDQETFEQIPLNAEKVEDAIKYLKENMFAVIKFFKGSAFSVEAPNFVELQITYTEPGVKGNTATNSLKPATVETGAIINVPMFVNDGDVIRIDTRTGEYMERV.

Belongs to the elongation factor P family.

Its subcellular location is the cytoplasm. It functions in the pathway protein biosynthesis; polypeptide chain elongation. Involved in peptide bond synthesis. Stimulates efficient translation and peptide-bond synthesis on native or reconstituted 70S ribosomes in vitro. Probably functions indirectly by altering the affinity of the ribosome for aminoacyl-tRNA, thus increasing their reactivity as acceptors for peptidyl transferase. In Clostridium botulinum (strain Alaska E43 / Type E3), this protein is Elongation factor P.